The sequence spans 395 residues: Zinc-regulated GTPase metalloprotein activator 1B (395 aa).

The disordered stretch occupies residues 1 to 36; it reads MLPAVGSADEEEDPAEEDCPELVPMETTQSEEEEKS. The span at 8–20 shows a compositional bias: acidic residues; the sequence is ADEEEDPAEEDCP. Residues 17 to 24 carry the psi-PxLVp motif motif; that stretch reads EDCPELVP. 49–56 serves as a coordination point for GTP; it reads GYLGAGKT. 3 residues coordinate Zn(2+): Cys-107, Cys-109, and Cys-110. The short motif at 107–110 is the CXCC motif element; that stretch reads CLCC. Residues 110–114 and 203–206 each bind GTP; these read CSVKD and NKTD. The CobW C-terminal domain maps to 274 to 377; it reads IVTITFEVPG…ILKQLFIATV (104 aa).

This sequence belongs to the SIMIBI class G3E GTPase family. ZNG1 subfamily.

Its subcellular location is the nucleus. The enzyme catalyses GTP + H2O = GDP + phosphate + H(+). In terms of biological role, zinc chaperone that directly transfers zinc cofactor to target metalloproteins, thereby activating them. Catalyzes zinc insertion into the active site of methionine aminopeptidase METAP1, which function to cleave the initiator methionine from polypeptides during or after protein translation. Mechanistically, the N-terminal psi-PxLVp motif binds to the C6H2-type zinc finger of inactive form of METAP1. After formation of the docked complex, zinc is transferred from the CXCC motif in the GTPase domain of ZNG1B to the zinc binding site in the peptidase domain of METAP1 in a process requiring GTP hydrolysis. GTP/GDP exchange is required for release of active METAP1. The polypeptide is Zinc-regulated GTPase metalloprotein activator 1B (Homo sapiens (Human)).